We begin with the raw amino-acid sequence, 314 residues long: 4-hydroxy-3-methylbut-2-enyl diphosphate reductase (314 aa).

Cysteine 12 is a [4Fe-4S] cluster binding site. Residues histidine 41 and histidine 74 each coordinate (2E)-4-hydroxy-3-methylbut-2-enyl diphosphate. Residues histidine 41 and histidine 74 each contribute to the dimethylallyl diphosphate site. Positions 41 and 74 each coordinate isopentenyl diphosphate. [4Fe-4S] cluster is bound at residue cysteine 96. Position 124 (histidine 124) interacts with (2E)-4-hydroxy-3-methylbut-2-enyl diphosphate. Dimethylallyl diphosphate is bound at residue histidine 124. An isopentenyl diphosphate-binding site is contributed by histidine 124. Glutamate 126 acts as the Proton donor in catalysis. (2E)-4-hydroxy-3-methylbut-2-enyl diphosphate is bound at residue threonine 167. Cysteine 197 is a [4Fe-4S] cluster binding site. (2E)-4-hydroxy-3-methylbut-2-enyl diphosphate contacts are provided by serine 225, serine 226, asparagine 227, and serine 269. Dimethylallyl diphosphate contacts are provided by serine 225, serine 226, asparagine 227, and serine 269. Isopentenyl diphosphate contacts are provided by serine 225, serine 226, asparagine 227, and serine 269.

This sequence belongs to the IspH family. Requires [4Fe-4S] cluster as cofactor.

It carries out the reaction isopentenyl diphosphate + 2 oxidized [2Fe-2S]-[ferredoxin] + H2O = (2E)-4-hydroxy-3-methylbut-2-enyl diphosphate + 2 reduced [2Fe-2S]-[ferredoxin] + 2 H(+). It catalyses the reaction dimethylallyl diphosphate + 2 oxidized [2Fe-2S]-[ferredoxin] + H2O = (2E)-4-hydroxy-3-methylbut-2-enyl diphosphate + 2 reduced [2Fe-2S]-[ferredoxin] + 2 H(+). It participates in isoprenoid biosynthesis; dimethylallyl diphosphate biosynthesis; dimethylallyl diphosphate from (2E)-4-hydroxy-3-methylbutenyl diphosphate: step 1/1. Its pathway is isoprenoid biosynthesis; isopentenyl diphosphate biosynthesis via DXP pathway; isopentenyl diphosphate from 1-deoxy-D-xylulose 5-phosphate: step 6/6. Functionally, catalyzes the conversion of 1-hydroxy-2-methyl-2-(E)-butenyl 4-diphosphate (HMBPP) into a mixture of isopentenyl diphosphate (IPP) and dimethylallyl diphosphate (DMAPP). Acts in the terminal step of the DOXP/MEP pathway for isoprenoid precursor biosynthesis. The chain is 4-hydroxy-3-methylbut-2-enyl diphosphate reductase from Idiomarina loihiensis (strain ATCC BAA-735 / DSM 15497 / L2-TR).